We begin with the raw amino-acid sequence, 1560 residues long: BRD4-interacting chromatin-remodeling complex-associated protein (1560 aa).

Disordered regions lie at residues 53–99, 624–688, 723–949, 974–1028, 1049–1075, and 1215–1300; these read VQEA…GADQ, APQA…ATPT, IVSA…VTTP, NKAG…TGLP, KAAS…KPPT, and SSEG…IKTY. Residues 86 to 96 are compositionally biased toward gly residues; the sequence is ATGGGGGGSGG. Over residues 624-664 the composition is skewed to low complexity; it reads APQAPPAVSTPLPLGLQQPQAQQPPQAPTPQAAAPPQATTP. Pro residues predominate over residues 726–736; the sequence is APPPAQDPAPA. Positions 747 to 780 are enriched in low complexity; sequence PQAPDSQASPAPAPQIPAAAPLKGPGPSSSPSLP. Pro residues-rich tracts occupy residues 791 to 806, 814 to 831, and 843 to 880; these read LPSP…PPSR, PSEP…PPTL, and VPPP…PHLP. Positions 881 to 896 are enriched in low complexity; sequence PSSTSSAVASSSETSS. Residue serine 919 is modified to Phosphoserine. Threonine 921 is subject to Phosphothreonine. Pro residues predominate over residues 932 to 941; that stretch reads PAAPPPPPPR. Residues 1005–1028 show a composition bias toward low complexity; the sequence is APSGTPTAPSHAPAPAPMAATGLP. The residue at position 1057 (lysine 1057) is an N6-acetyllysine. Residues 1227–1236 show a composition bias toward polar residues; sequence LSSSAPGAST. The segment covering 1264–1281 has biased composition (low complexity); it reads ASSSLSSSSSSSSAASSL. A Glycyl lysine isopeptide (Lys-Gly) (interchain with G-Cter in SUMO2) cross-link involves residue lysine 1313. 2 disordered regions span residues 1324 to 1424 and 1440 to 1560; these read NTAL…VDEA and YQRM…TLTR. Residues 1331–1356 are compositionally biased toward pro residues; sequence HQPPPPPATLKVAEPPPRPPPPPPPT. The span at 1401–1412 shows a compositional bias: low complexity; it reads PEGTPAGRARGG. Serine 1413 bears the Phosphoserine mark. Residues 1485 to 1515 are compositionally biased toward polar residues; the sequence is ASFSSDSPQDDTLTEHLQSAIDSILNLQQAP.

As to quaternary structure, component of the multiprotein chromatin-remodeling complexes SWI/SNF: SWI/SNF-A (BAF), SWI/SNF-B (PBAF) and related complexes. The canonical complex contains a catalytic subunit (either SMARCA4/BRG1/BAF190A or SMARCA2/BRM/BAF190B) and at least SMARCE1, ACTL6A/BAF53, SMARCC1/BAF155, SMARCC2/BAF170, and SMARCB1/SNF5/BAF47. Other subunits specific to each of the complexes may also be present permitting several possible combinations developmentally and tissue specific. Component of the SWI/SNF (GBAF) subcomplex, which includes at least BICRA or BICRAL (mutually exclusive), BRD9, SS18, the core BAF subunits, SMARCA2/BRM, SMARCA4/BRG1/BAF190A, ACTL6A/BAF53, SMARCC1/BAF155, and SMARCD1/BAF60A. Interacts with BRD4; the interaction bridges BRD4 to the GBAF complex. Expressed at moderate levels in heart, brain, placenta, skeletal muscle, and pancreas, and at lower levels in lung, liver and kidney.

It is found in the nucleus. Its function is as follows. Component of SWI/SNF chromatin remodeling subcomplex GBAF that carries out key enzymatic activities, changing chromatin structure by altering DNA-histone contacts within a nucleosome in an ATP-dependent manner. May play a role in BRD4-mediated gene transcription. The sequence is that of BRD4-interacting chromatin-remodeling complex-associated protein from Homo sapiens (Human).